The primary structure comprises 298 residues: Small ribosomal subunit protein uS3 (298 aa).

Positions 39 to 107 (VREYLKAKLK…PVAVNIEEVR (69 aa)) constitute a KH type-2 domain. The interval 214–298 (PAAVEARTDE…PAAAADGKGE (85 aa)) is disordered. Basic and acidic residues predominate over residues 219–245 (ARTDEERRPRGPRRDDRGARPGADRPA). Residues 277-298 (KPAVQRVRKVAAPAAAADGKGE) show a composition bias toward low complexity.

The protein belongs to the universal ribosomal protein uS3 family. As to quaternary structure, part of the 30S ribosomal subunit. Forms a tight complex with proteins S10 and S14.

Its function is as follows. Binds the lower part of the 30S subunit head. Binds mRNA in the 70S ribosome, positioning it for translation. The sequence is that of Small ribosomal subunit protein uS3 from Albidiferax ferrireducens (strain ATCC BAA-621 / DSM 15236 / T118) (Rhodoferax ferrireducens).